A 675-amino-acid chain; its full sequence is MTSTKDKIEKLRKILLKYEYFYHTLNQSIISDAEYDYLFRQLYELELKHKELIPSDSPTQKVGSHILQKFKKIKHFSPMLSLENTFDVNGYLNFKKRIKKSIHNNEPLSFCCELKLDGVAISIIYEEGIFVRAATRGDGFEGENITSNARMIDSIPLKLKGIDIPKRLEIRGEVFMLKSNFIKLNKKYKLNQNKYFSNPRNAAAGSLRHIDPNITAERKLIFSCHGCDFFVKTNKELTTHYQRLMKCLSWGIPVNKEIVICSSDIEIIQFYKKIAQKRNFLDFDIDGIVIKVNSLELQKKIGSTTKSPRWAIAFKFSPKERITTLNDVKFQVGRTGVITPVAYFNPVYISGVMISKASLHNKNEIERLNLHFNDTITICRSGDVIPRLLNVIEIRRCDNAKKIIFPSFCPVCNTELLENIEEKLIRCHSGLTCDAQKKQALYHFFSKKSLYVVGLGPKIINELVEKGLVKNPIDFFYLKDIDLIQLKNVGKRKSIKIINSIKKCKKTTLKCFIYALGIPGVGEVVAGKIANYFIKLDKLMNSNILELNCISGVGKIISNNIFNYFSTISNREMVVKLIKQAGIFLNDQEIHKINSEKTYFFNKKIVLTGVFKSFSRIELKTILLSLGAKISNNISRKTDFLIYGNNFGSKFFRAKDLDVKIINQEELNSLIRIKE.

NAD(+) contacts are provided by residues 32-36 (DAEYD), 81-82 (SL), and Glu-113. Residue Lys-115 is the N6-AMP-lysine intermediate of the active site. NAD(+)-binding residues include Arg-136, Glu-173, Lys-291, and Lys-315. Zn(2+) contacts are provided by Cys-409, Cys-412, Cys-427, and Cys-433. The region spanning 595–675 (SEKTYFFNKK…ELNSLIRIKE (81 aa)) is the BRCT domain.

This sequence belongs to the NAD-dependent DNA ligase family. LigA subfamily. Mg(2+) serves as cofactor. Mn(2+) is required as a cofactor.

It catalyses the reaction NAD(+) + (deoxyribonucleotide)n-3'-hydroxyl + 5'-phospho-(deoxyribonucleotide)m = (deoxyribonucleotide)n+m + AMP + beta-nicotinamide D-nucleotide.. In terms of biological role, DNA ligase that catalyzes the formation of phosphodiester linkages between 5'-phosphoryl and 3'-hydroxyl groups in double-stranded DNA using NAD as a coenzyme and as the energy source for the reaction. It is essential for DNA replication and repair of damaged DNA. The protein is DNA ligase of Buchnera aphidicola subsp. Acyrthosiphon pisum (strain 5A).